The sequence spans 127 residues: Large ribosomal subunit protein bL17 (127 aa).

Belongs to the bacterial ribosomal protein bL17 family. Part of the 50S ribosomal subunit. Contacts protein L32.

In Alcanivorax borkumensis (strain ATCC 700651 / DSM 11573 / NCIMB 13689 / SK2), this protein is Large ribosomal subunit protein bL17.